A 158-amino-acid chain; its full sequence is Peroxidase (158 aa).

Position 2 (Pro2) interacts with substrate. His32 provides a ligand contact to heme b. Position 33 (Thr33) interacts with Ca(2+). Cys39 and Cys64 are disulfide-bonded. Asn48 carries N-linked (GlcNAc...) asparagine glycosylation. Ca(2+)-binding residues include Asp78, Thr81, and Asp86.

Belongs to the peroxidase family. Classical plant (class III) peroxidase subfamily. Ca(2+) is required as a cofactor. It depends on heme b as a cofactor.

The catalysed reaction is 2 a phenolic donor + H2O2 = 2 a phenolic radical donor + 2 H2O. Its function is as follows. Removal of H(2)O(2), oxidation of toxic reductants, biosynthesis and degradation of lignin, suberization, auxin catabolism, response to environmental stresses such as wounding, pathogen attack and oxidative stress. These functions might be dependent on each isozyme/isoform in each plant tissue. The chain is Peroxidase from Lupinus polyphyllus (Large-leaved lupine).